The primary structure comprises 542 residues: Chaperonin GroEL (542 aa).

Residues 29-32 (TLGP), 86-90 (DGTTT), glycine 413, 477-479 (NAA), and aspartate 493 contribute to the ATP site.

It belongs to the chaperonin (HSP60) family. As to quaternary structure, forms a cylinder of 14 subunits composed of two heptameric rings stacked back-to-back. Interacts with the co-chaperonin GroES.

It is found in the cytoplasm. It catalyses the reaction ATP + H2O + a folded polypeptide = ADP + phosphate + an unfolded polypeptide.. In terms of biological role, together with its co-chaperonin GroES, plays an essential role in assisting protein folding. The GroEL-GroES system forms a nano-cage that allows encapsulation of the non-native substrate proteins and provides a physical environment optimized to promote and accelerate protein folding. In Beutenbergia cavernae (strain ATCC BAA-8 / DSM 12333 / CCUG 43141 / JCM 11478 / NBRC 16432 / NCIMB 13614 / HKI 0122), this protein is Chaperonin GroEL.